We begin with the raw amino-acid sequence, 276 residues long: Syntaxin-12 (276 aa).

N-acetylserine is present on serine 2. At 2–248 (SYGPLDMYRN…RAAYYQKKSR (247 aa)) the chain is on the cytoplasmic side. The stretch at 33-131 (IQRISQATAQ…RRVSEKEKES (99 aa)) forms a coiled coil. Residues serine 139, serine 142, serine 218, and serine 225 each carry the phosphoserine modification. In terms of domain architecture, t-SNARE coiled-coil homology spans 178-240 (LELIKERETA…ERATEQLQRA (63 aa)). The chain crosses the membrane as a helical; Anchor for type IV membrane protein span at residues 249-269 (KKMCILVLVLSVIIVILGLII). The Vesicular portion of the chain corresponds to 270-276 (WLVYKTK).

The protein belongs to the syntaxin family. In terms of assembly, associates with the BLOC-1 complex. Interacts with BLOC1S6. Interacts with NAPA and SNAP23. Identified in a complex containing STX6, STX12, VAMP4 and VTI1A. Interacts with GRIPAP1. Forms a complex with GRIP1, GRIA2 and NSG1; controls the intracellular fate of AMPAR and the endosomal sorting of the GRIA2 subunit toward recycling and membrane targeting. Interacts with NSG1. Interacts with TPC1. Interacts (via N-terminus) with VPS13B.

The protein localises to the endosome membrane. It is found in the golgi apparatus membrane. It localises to the endomembrane system. Its subcellular location is the early endosome membrane. The protein resides in the recycling endosome membrane. Functionally, SNARE promoting fusion of transport vesicles with target membranes. Together with SNARE STX6, promotes movement of vesicles from endosomes to the cell membrane, and may therefore function in the endocytic recycling pathway. Through complex formation with GRIP1, GRIA2 and NSG1 controls the intracellular fate of AMPAR and the endosomal sorting of the GRIA2 subunit toward recycling and membrane targeting. In Pongo abelii (Sumatran orangutan), this protein is Syntaxin-12 (STX12).